Consider the following 384-residue polypeptide: Mannitol-1-phosphate 5-dehydrogenase (384 aa).

3-14 (AVHFGAGNIGRG) contributes to the NAD(+) binding site.

It belongs to the mannitol dehydrogenase family. Monomer.

It catalyses the reaction D-mannitol 1-phosphate + NAD(+) = beta-D-fructose 6-phosphate + NADH + H(+). This Enterococcus faecalis (strain ATCC 700802 / V583) protein is Mannitol-1-phosphate 5-dehydrogenase (mtlD).